Here is a 198-residue protein sequence, read N- to C-terminus: Glycerol-3-phosphate acyltransferase (198 aa).

5 helical membrane passes run 2 to 22, 48 to 70, 75 to 97, 111 to 131, and 154 to 174; these read YAVL…AYIL, LGYK…AVLI, MGNT…PVFL, VVMT…VTVI, and IFWN…LAIF.

Belongs to the PlsY family. As to quaternary structure, probably interacts with PlsX.

It is found in the cell membrane. It catalyses the reaction an acyl phosphate + sn-glycerol 3-phosphate = a 1-acyl-sn-glycero-3-phosphate + phosphate. The protein operates within lipid metabolism; phospholipid metabolism. Its function is as follows. Catalyzes the transfer of an acyl group from acyl-phosphate (acyl-PO(4)) to glycerol-3-phosphate (G3P) to form lysophosphatidic acid (LPA). This enzyme utilizes acyl-phosphate as fatty acyl donor, but not acyl-CoA or acyl-ACP. The protein is Glycerol-3-phosphate acyltransferase of Thermoanaerobacter pseudethanolicus (strain ATCC 33223 / 39E) (Clostridium thermohydrosulfuricum).